A 375-amino-acid chain; its full sequence is Succinyl-diaminopimelate desuccinylase (375 aa).

Histidine 66 provides a ligand contact to Zn(2+). Residue aspartate 68 is part of the active site. Residue aspartate 99 coordinates Zn(2+). The active-site Proton acceptor is the glutamate 133. 3 residues coordinate Zn(2+): glutamate 134, glutamate 162, and histidine 348.

It belongs to the peptidase M20A family. DapE subfamily. Homodimer. Requires Zn(2+) as cofactor. Co(2+) serves as cofactor.

It carries out the reaction N-succinyl-(2S,6S)-2,6-diaminopimelate + H2O = (2S,6S)-2,6-diaminopimelate + succinate. The protein operates within amino-acid biosynthesis; L-lysine biosynthesis via DAP pathway; LL-2,6-diaminopimelate from (S)-tetrahydrodipicolinate (succinylase route): step 3/3. Its function is as follows. Catalyzes the hydrolysis of N-succinyl-L,L-diaminopimelic acid (SDAP), forming succinate and LL-2,6-diaminopimelate (DAP), an intermediate involved in the bacterial biosynthesis of lysine and meso-diaminopimelic acid, an essential component of bacterial cell walls. In Salmonella typhi, this protein is Succinyl-diaminopimelate desuccinylase.